Reading from the N-terminus, the 214-residue chain is Sugar transporter SWEET1 (214 aa).

A run of 7 helical transmembrane segments spans residues 3–23 (WMWL…SSGL), 38–58 (IQFL…YYGY), 65–85 (LIIV…AYIL), 93–113 (VVSQ…YFTL), 125–145 (LGLF…ADLA), 157–177 (SFPL…YGWV), and 181–201 (LYIT…FWLF). The MtN3/slv 1 domain occupies 6–89 (LLSGACIVFT…MAAYILYSLE (84 aa)). The 84-residue stretch at 124-207 (QLGLFCSIFT…FWLFSRYPPD (84 aa)) folds into the MtN3/slv 2 domain.

Belongs to the SWEET sugar transporter family.

The protein resides in the golgi apparatus membrane. It is found in the cell membrane. Mediates sugar transport across membranes. In Xenopus tropicalis (Western clawed frog), this protein is Sugar transporter SWEET1 (slc50a1).